The sequence spans 548 residues: MSQFAEFKLPAIKNEPPKHYGPNSADREGIVKAYKELEAELPVTIPVIIDGKEVETNTIGEQRCPFEHKKVVARYHRAGAKHVEDAIEAALRGKKVWESLPFADRSAIFLKAAHLISTKYRYKLMAATMIGQGKNIWQAEIDAGMEIIDFLRFNTKYASELYASQPPENTPGVWNRMEYRPLEGFVYAITPFNFTAIAGNLAAAPLLMGNVVLMKPSDHAVLSSYIVYQIFREAGLPAGALQFIPGDAVEVSKVCFNHPEFAGLHFTGSTAVFRSLWGTIGENVANGKYRTYPKIVGETGGKNFHLVHSSAEIKSAVVNAVRAAFEYQGQKCSALSRLYVSKYAWENGFRDELTKQVKSLKVGAPLTDFANFVGPVIHQASFNKLKKVLESAASDSEIEVLAGGKADDSEGFFVEPTVLLSKNPKHDIFVNELFGPVLSVYVYEDDNLDAVCDLIDTTTPYGLTGSIFAQDRVVVRKLTDRLRNAAGNFYINDKCTGAVVGEQPFGGARASGTNDKAGSGMILSRFVSPRSIKDTFAYADSVLYPSNF.

Catalysis depends on Glu298, which acts as the Proton acceptor. Cys332 functions as the Nucleophile in the catalytic mechanism. Phosphoserine occurs at positions 391, 394, and 396.

This sequence belongs to the aldehyde dehydrogenase family.

It catalyses the reaction L-glutamate 5-semialdehyde + NAD(+) + H2O = L-glutamate + NADH + 2 H(+). It participates in amino-acid degradation; L-proline degradation into L-glutamate; L-glutamate from L-proline: step 2/2. The polypeptide is Probable delta-1-pyrroline-5-carboxylate dehydrogenase (Schizosaccharomyces pombe (strain 972 / ATCC 24843) (Fission yeast)).